The primary structure comprises 56 residues: Photosystem II reaction center X protein (56 aa).

The chain crosses the membrane as a helical span at residues 27–47 (IGSFLAAGALIVAPAAAALIW).

The protein belongs to the PsbX family. Type 2 subfamily. PSII consists of a core antenna complex that captures photons, and an electron transfer chain that converts photonic excitation into a charge separation. PSII forms dimeric complexes.

It localises to the cellular thylakoid membrane. Involved in the binding and/or turnover of quinones at the Q(B) site of Photosystem II. This chain is Photosystem II reaction center X protein, found in Prochlorococcus marinus (strain NATL2A).